A 294-amino-acid polypeptide reads, in one-letter code: Protein huluwa (294 aa).

The Extracellular portion of the chain corresponds to 1–23 (MSQLGSAVPSSNLPEGLPVSSLA). A helical membrane pass occupies residues 24–44 (LLILVLIPCVLLLLLLNCLFV). Residues 45–294 (GYKLFRMTRR…PPITTKQYWV (250 aa)) are Cytoplasmic-facing. Residues 154–175 (SDSDMERVNTVPPNSPVLRVTP) form a disordered region. The short motif at 164–169 (VPPNSP) is the VPPNSP motif element. An SLRRSST motif motif is present at residues 184 to 190 (SLRRSST).

The protein belongs to the huluwa family. As to quaternary structure, interacts with axin1; leading to promote the tankyrase-mediated degradation of axin. Interacts with axin2; leading to promote the tankyrase-mediated degradation of axin.

Its subcellular location is the cell membrane. Key maternal determinant of the dorsal organizer and body axis formation in vertebrates that acts by promoting stabilization of beta-catenin (ctnnb1). Localizes on the plasma membrane of the future dorsal blastomeres in early blastulas and binds to and promotes the tankyrase-mediated degradation of axin (axin1 and axin2). Axin degradation results in stabilization and nuclear translocation of beta-catenin (ctnnb1) for activating organizer-specific target gene expression. In Danio rerio (Zebrafish), this protein is Protein huluwa.